A 311-amino-acid chain; its full sequence is Malate dehydrogenase (311 aa).

NAD(+) contacts are provided by residues 7 to 13 and aspartate 34; that span reads GAAGGIG. Substrate is bound by residues arginine 81 and arginine 87. Residues asparagine 94 and 117–119 each bind NAD(+); that span reads ITN. Substrate contacts are provided by asparagine 119 and arginine 153. The active-site Proton acceptor is the histidine 177. Position 227 (methionine 227) interacts with NAD(+).

It belongs to the LDH/MDH superfamily. MDH type 1 family. In terms of assembly, homodimer.

It carries out the reaction (S)-malate + NAD(+) = oxaloacetate + NADH + H(+). Its function is as follows. Catalyzes the reversible oxidation of malate to oxaloacetate. The polypeptide is Malate dehydrogenase (Shewanella sediminis (strain HAW-EB3)).